A 326-amino-acid chain; its full sequence is Pyruvate dehydrogenase E1 component subunit alpha (326 aa).

In terms of assembly, heterodimer of an alpha and a beta chain. It depends on thiamine diphosphate as a cofactor.

The enzyme catalyses N(6)-[(R)-lipoyl]-L-lysyl-[protein] + pyruvate + H(+) = N(6)-[(R)-S(8)-acetyldihydrolipoyl]-L-lysyl-[protein] + CO2. Its function is as follows. The pyruvate dehydrogenase complex catalyzes the overall conversion of pyruvate to acetyl-CoA and CO(2). It contains multiple copies of three enzymatic components: pyruvate dehydrogenase (E1), dihydrolipoamide acetyltransferase (E2) and lipoamide dehydrogenase (E3). This is Pyruvate dehydrogenase E1 component subunit alpha (pdhA) from Rickettsia bellii (strain RML369-C).